We begin with the raw amino-acid sequence, 393 residues long: Digeranylgeranylglycerophospholipid reductase (393 aa).

Residues Ala-13, Asp-32, Cys-43, Ala-44, Gly-46, Arg-95, Val-119, Asp-274, and Gly-286 each contribute to the FAD site. Lys-327 and Gly-363 together coordinate a 2,3-bis-O-(geranylgeranyl)-sn-glycerol 1-phospholipid.

The protein belongs to the geranylgeranyl reductase family. DGGGPL reductase subfamily. FAD serves as cofactor.

It carries out the reaction a 2,3-bis-O-phytanyl-sn-glycerol 1-phospholipid + 8 A = a 2,3-bis-O-(geranylgeranyl)-sn-glycerol 1-phospholipid + 8 AH2. The enzyme catalyses 2,3-bis-O-(phytanyl)-sn-glycerol 1-phosphate + 8 A = 2,3-bis-O-(geranylgeranyl)-sn-glycerol 1-phosphate + 8 AH2. The catalysed reaction is CDP-2,3-bis-O-(geranylgeranyl)-sn-glycerol + 8 AH2 = CDP-2,3-bis-O-(phytanyl)-sn-glycerol + 8 A. It catalyses the reaction archaetidylserine + 8 AH2 = 2,3-bis-O-phytanyl-sn-glycero-3-phospho-L-serine + 8 A. The protein operates within membrane lipid metabolism; glycerophospholipid metabolism. Is involved in the reduction of 2,3-digeranylgeranylglycerophospholipids (unsaturated archaeols) into 2,3-diphytanylglycerophospholipids (saturated archaeols) in the biosynthesis of archaeal membrane lipids. Catalyzes the formation of archaetidic acid (2,3-di-O-phytanyl-sn-glyceryl phosphate) from 2,3-di-O-geranylgeranylglyceryl phosphate (DGGGP) via the hydrogenation of each double bond of the isoprenoid chains. Is also probably able to reduce double bonds of geranyl groups in CDP-2,3-bis-O-(geranylgeranyl)-sn-glycerol and archaetidylserine, thus acting at various stages in the biosynthesis of archaeal membrane lipids. The protein is Digeranylgeranylglycerophospholipid reductase of Pyrococcus furiosus (strain ATCC 43587 / DSM 3638 / JCM 8422 / Vc1).